The chain runs to 63 residues: uncharacterized protein (63 aa).

This is an uncharacterized protein from Azospirillum brasilense.